A 1606-amino-acid chain; its full sequence is Fatty acid synthase apf5 (1606 aa).

A Carrier domain is found at Val142–Gln218. Ser177 carries the O-(pantetheine 4'-phosphoryl)serine modification. The region spanning Lys996–His1539 is the Ketosynthase family 3 (KS3) domain. Residues Cys1182, His1424, and His1465 each act as for beta-ketoacyl synthase activity in the active site.

The protein belongs to the thiolase-like superfamily. Fungal fatty acid synthetase subunit alpha family.

It carries out the reaction a fatty acyl-[ACP] + malonyl-[ACP] + H(+) = a 3-oxoacyl-[ACP] + holo-[ACP] + CO2. The protein operates within secondary metabolite biosynthesis. Functionally, fatty acid synthase; part of the gene cluster that mediates the biosynthesis of the cyclic tetrapeptide apicidin F (APF). The non-ribosomal peptide synthetase apf1 incorporates four different amino acids to produce apicidin F: L-phenylalanine, D-pipecolic acid (D-pip), N-methoxy-L-tryptophan and L-2-aminooctanedioic acid. L-Phenylalanine is the only proteinogenic amino acid directly used by apf1. The 3 other apf1 substrates are non-proteinogenic and have to be modified by other enzymes of the cluster. Lysine is converted to delta-1-pyrroline-5-carboxylate (P5C) which is reduced to L-pipecolic acid (L-pip) by apf3. L-pip is epimerized to D-pip, probably by apf1 activity, prior to incorporation. L-Tryptophan is N-oxidyzed by one of the cytochrome P450 monooxygenases (apf7 or apf8), and further methylated at the hydroxy group by the O-methyltransferase apf6 to yield N-methoxy-L-tryptophan. The synthesis of the fourth apf1 substrate is more complex. The fatty acid synthase apf5 is involved in the synthesis of the octanoic acid backbone of L-2-aminooctanedioic acid by fixing one acetyl-CoA unit and three malonyl-CoA units. Then one of the cytochrome P450 monooxygenases (apf7 or apf8) may oxidize this backbone to 2-oxooctanoic acid. The aminotransferase apf4 is predicted to catalyze the exchange of the keto group with an amino group. The next step would be the oxidation of 2-aminooctanoic acid by one of the cytochrome P450 monooxygenases (apf7 or apf8). The last step is the oxidation of 2-amino-8-hydroxyoctanoic acid to 2-aminooctanedioic acid is catalyzed by the FAD-dependent monooxygenase apf9. The sequence is that of Fatty acid synthase apf5 from Gibberella fujikuroi (strain CBS 195.34 / IMI 58289 / NRRL A-6831) (Bakanae and foot rot disease fungus).